The sequence spans 352 residues: Protein RecA (352 aa).

Residue 67 to 74 (GPESSGKT) participates in ATP binding.

This sequence belongs to the RecA family.

The protein localises to the cytoplasm. Functionally, can catalyze the hydrolysis of ATP in the presence of single-stranded DNA, the ATP-dependent uptake of single-stranded DNA by duplex DNA, and the ATP-dependent hybridization of homologous single-stranded DNAs. It interacts with LexA causing its activation and leading to its autocatalytic cleavage. This Chlamydia trachomatis serovar L2 (strain ATCC VR-902B / DSM 19102 / 434/Bu) protein is Protein RecA.